The chain runs to 104 residues: Large ribosomal subunit protein uL24 (104 aa).

Belongs to the universal ribosomal protein uL24 family. As to quaternary structure, part of the 50S ribosomal subunit.

One of two assembly initiator proteins, it binds directly to the 5'-end of the 23S rRNA, where it nucleates assembly of the 50S subunit. Its function is as follows. One of the proteins that surrounds the polypeptide exit tunnel on the outside of the subunit. This chain is Large ribosomal subunit protein uL24, found in Rhodopseudomonas palustris (strain BisA53).